A 521-amino-acid chain; its full sequence is Amidase (521 aa).

Residues lysine 96 and serine 171 each act as charge relay system in the active site. The interval serine 155–glycine 174 is disordered. Serine 195 acts as the Acyl-ester intermediate in catalysis.

This sequence belongs to the amidase family. As to quaternary structure, homodimer.

It carries out the reaction a monocarboxylic acid amide + H2O = a monocarboxylate + NH4(+). Functionally, hydrolyzes propionamides efficiently, and also at a lower efficiency, acetamide, acrylamide and indoleacetamide. This enzyme seems to be stereospecific and can lead to the production of a single enantiomer. The protein is Amidase (amdA) of Rhodococcus erythropolis (Arthrobacter picolinophilus).